A 232-amino-acid chain; its full sequence is 5'-methylthioadenosine/S-adenosylhomocysteine nucleosidase (232 aa).

The active-site Proton acceptor is Glu12. Substrate contacts are provided by residues Gly78, Met153, and 174–175 (ME). Asp198 acts as the Proton donor in catalysis.

The protein belongs to the PNP/UDP phosphorylase family. MtnN subfamily.

The catalysed reaction is S-adenosyl-L-homocysteine + H2O = S-(5-deoxy-D-ribos-5-yl)-L-homocysteine + adenine. The enzyme catalyses S-methyl-5'-thioadenosine + H2O = 5-(methylsulfanyl)-D-ribose + adenine. It carries out the reaction 5'-deoxyadenosine + H2O = 5-deoxy-D-ribose + adenine. The protein operates within amino-acid biosynthesis; L-methionine biosynthesis via salvage pathway; S-methyl-5-thio-alpha-D-ribose 1-phosphate from S-methyl-5'-thioadenosine (hydrolase route): step 1/2. Catalyzes the irreversible cleavage of the glycosidic bond in both 5'-methylthioadenosine (MTA) and S-adenosylhomocysteine (SAH/AdoHcy) to adenine and the corresponding thioribose, 5'-methylthioribose and S-ribosylhomocysteine, respectively. Also cleaves 5'-deoxyadenosine, a toxic by-product of radical S-adenosylmethionine (SAM) enzymes, into 5-deoxyribose and adenine. This chain is 5'-methylthioadenosine/S-adenosylhomocysteine nucleosidase, found in Anoxybacillus flavithermus (strain DSM 21510 / WK1).